A 968-amino-acid polypeptide reads, in one-letter code: Putative pectinesterase/pectinesterase inhibitor 26 (968 aa).

The helical transmembrane segment at 33–53 (IGISVAVLVAIIISSTVTIAI) threads the bilayer. The pectinesterase inhibitor 26 A stretch occupies residues 71–230 (LTPAASLKTV…TEFTSNSLAI (160 aa)). Asparagine 101, asparagine 158, asparagine 219, asparagine 295, asparagine 352, asparagine 400, asparagine 464, asparagine 541, asparagine 559, and asparagine 603 each carry an N-linked (GlcNAc...) asparagine glycan. Residues 265-430 (LTPAASLRNV…RKFTSNSLAI (166 aa)) form a pectinesterase inhibitor 26 B region. Residues 453–614 (PTPSSVLRTV…TEFTSNSLAI (162 aa)) are pectinesterase inhibitor 26 C. The segment at 660–954 (HVTVAADGSG…FTVKYFLRGD (295 aa)) is pectinesterase 26. A substrate-binding site is contributed by threonine 735. Asparagine 737 is a glycosylation site (N-linked (GlcNAc...) asparagine). Glutamine 765 contacts substrate. Residue aspartate 788 is the Proton donor; for pectinesterase activity of the active site. Cysteine 802 and cysteine 822 are disulfide-bonded. Aspartate 809 serves as the catalytic Nucleophile; for pectinesterase activity. Asparagine 863 carries an N-linked (GlcNAc...) asparagine glycan. Substrate contacts are provided by arginine 872 and tryptophan 874. An N-linked (GlcNAc...) asparagine glycan is attached at asparagine 900.

This sequence in the N-terminal section; belongs to the PMEI family. In the C-terminal section; belongs to the pectinesterase family. As to expression, expressed in flowers.

It is found in the membrane. The enzyme catalyses [(1-&gt;4)-alpha-D-galacturonosyl methyl ester](n) + n H2O = [(1-&gt;4)-alpha-D-galacturonosyl](n) + n methanol + n H(+). It functions in the pathway glycan metabolism; pectin degradation; 2-dehydro-3-deoxy-D-gluconate from pectin: step 1/5. Acts in the modification of cell walls via demethylesterification of cell wall pectin. This is Putative pectinesterase/pectinesterase inhibitor 26 (PME26) from Arabidopsis thaliana (Mouse-ear cress).